The following is a 543-amino-acid chain: Serine/threonine-protein kinase Chk2 (543 aa).

Positions 1 to 66 (MSRESDVEAQ…SGTLSSLETV (66 aa)) are disordered. Residues 8 to 22 (EAQQSHGSSACSQPH) show a composition bias toward polar residues. Residues 23 to 62 (GSVTQSQGSSSQSQGISSSSTSTMPNSSQSSHSSSGTLSS) are compositionally biased toward low complexity. The residue at position 62 (Ser-62) is a Phosphoserine; by PLK3. Phosphothreonine; by ATM and MAP3K20 is present on Thr-68. Ser-73 is modified (phosphoserine; by PLK3). Residues 113 to 175 (YWFGRDKSCE…NGTFVNTELV (63 aa)) form the FHA domain. The region spanning 220-486 (YIMSKTLGSG…TEEALRHPWL (267 aa)) is the Protein kinase domain. Residues 227–234 (GSGACGEV), Lys-249, and 302–308 (ELMEGGE) contribute to the ATP site. Asp-347 (proton acceptor) is an active-site residue. Residues 351 to 352 (EN) and Asp-368 contribute to the ATP site. Positions 368-394 (DFGHSKILGETSLMRTLCGTPTYLAPE) are T-loop/activation segment. Ser-379 is modified (phosphoserine; by autocatalysis). Residues Thr-383 and Thr-387 each carry the phosphothreonine; by autocatalysis modification. Ser-456 is modified (phosphoserine). Over residues 506–517 (TALPQVLAQPST) the composition is skewed to polar residues. A disordered region spans residues 506–538 (TALPQVLAQPSTSRKRPREGEAEGAETTKRPAV). Residues 523–534 (REGEAEGAETTK) show a composition bias toward basic and acidic residues.

The protein belongs to the protein kinase superfamily. CAMK Ser/Thr protein kinase family. CHK2 subfamily. In terms of assembly, homodimer. Homodimerization is part of the activation process but the dimer may dissociate following activation. Interacts with PML. Interacts with TP53. Interacts with RB1; phosphorylates RB1. Interacts with BRCA1. Interacts (phosphorylated at Thr-68) with MDC1; requires ATM-mediated phosphorylation of CHEK2. Interacts with TP53BP1; modulates CHEK2 phosphorylation at Thr-68 in response to ionizing radiation. Interacts with CDC25A; phosphorylates CDC25A and mediates its degradation in response to ionizing radiation. Interacts with CUL1; mediates CHEK2 ubiquitination and regulation. Interacts with CDKN2AIP. Interacts (via protein kinase domain) with CCAR2 (via N-terminus). Interacts with SIRT1. Requires Mg(2+) as cofactor. Post-translationally, phosphorylated. Phosphorylated at Ser-73 by PLK3 in response to DNA damage, promoting phosphorylation at Thr-68 by ATM and the G2/M transition checkpoint. Phosphorylation at Thr-68 induces homodimerization. Autophosphorylates at Thr-383 and Thr-387 in the T-loop/activation segment upon dimerization to become fully active and phosphorylate its substrates like for instance CDC25C. DNA damage-induced autophosphorylation at Ser-379 induces CUL1-mediated ubiquitination and regulates the pro-apoptotic function. Phosphorylation at Ser-456 also regulates ubiquitination. Phosphorylated by PLK4. In terms of processing, ubiquitinated. CUL1-mediated ubiquitination regulates the pro-apoptotic function. Ubiquitination may also regulate protein stability. Ubiquitinated by RNF8 via 'Lys-48'-linked ubiquitination. As to expression, high expression is found in testis, spleen, colon and peripheral blood leukocytes. Low expression is found in other tissues.

The protein resides in the nucleus. It localises to the PML body. The protein localises to the nucleoplasm. The catalysed reaction is L-seryl-[protein] + ATP = O-phospho-L-seryl-[protein] + ADP + H(+). It catalyses the reaction L-threonyl-[protein] + ATP = O-phospho-L-threonyl-[protein] + ADP + H(+). With respect to regulation, activated through phosphorylation at Thr-68 by ATM in response to DNA double-strand breaks. Activation is modulated by several mediators including MDC1 and TP53BP1. Induces homodimerization with exchange of the T-loop/activation segment between protomers and transphosphorylation of the protomers. The autophosphorylated kinase dimer is fully active. Negatively regulated by PPM1D through dephosphorylation of Thr-68. In terms of biological role, serine/threonine-protein kinase which is required for checkpoint-mediated cell cycle arrest, activation of DNA repair and apoptosis in response to the presence of DNA double-strand breaks. May also negatively regulate cell cycle progression during unperturbed cell cycles. Following activation, phosphorylates numerous effectors preferentially at the consensus sequence [L-X-R-X-X-S/T]. Regulates cell cycle checkpoint arrest through phosphorylation of CDC25A, CDC25B and CDC25C, inhibiting their activity. Inhibition of CDC25 phosphatase activity leads to increased inhibitory tyrosine phosphorylation of CDK-cyclin complexes and blocks cell cycle progression. May also phosphorylate NEK6 which is involved in G2/M cell cycle arrest. Regulates DNA repair through phosphorylation of BRCA2, enhancing the association of RAD51 with chromatin which promotes DNA repair by homologous recombination. Also stimulates the transcription of genes involved in DNA repair (including BRCA2) through the phosphorylation and activation of the transcription factor FOXM1. Regulates apoptosis through the phosphorylation of p53/TP53, MDM4 and PML. Phosphorylation of p53/TP53 at 'Ser-20' by CHEK2 may alleviate inhibition by MDM2, leading to accumulation of active p53/TP53. Phosphorylation of MDM4 may also reduce degradation of p53/TP53. Also controls the transcription of pro-apoptotic genes through phosphorylation of the transcription factor E2F1. Tumor suppressor, it may also have a DNA damage-independent function in mitotic spindle assembly by phosphorylating BRCA1. Its absence may be a cause of the chromosomal instability observed in some cancer cells. Promotes the CCAR2-SIRT1 association and is required for CCAR2-mediated SIRT1 inhibition. Under oxidative stress, promotes ATG7 ubiquitination by phosphorylating the E3 ubiquitin ligase TRIM32 at 'Ser-55' leading to positive regulation of the autophagosme assembly. Functionally, (Microbial infection) Phosphorylates herpes simplex virus 1/HHV-1 protein ICP0 and thus activates its SUMO-targeted ubiquitin ligase activity. The protein is Serine/threonine-protein kinase Chk2 of Homo sapiens (Human).